A 36-amino-acid polypeptide reads, in one-letter code: NERHVTCFYVKFGCKHTECITTIVFCWQTASDISSV.

A propeptide spanning residues 1–2 (NE) is cleaved from the precursor.

Contains 2 disulfide bond. As to expression, expressed by the venom duct.

Its subcellular location is the secreted. This is Conotoxin Cl14.10 from Californiconus californicus (California cone).